A 153-amino-acid chain; its full sequence is Putative OPA3-like protein CG43998 (153 aa).

The stretch at 101–153 (ELSKTYTKTKKQNQEIEDQKRVLDECVDCISADVERNQREINWIKAALKNVEK) forms a coiled coil.

It belongs to the OPA3 family.

The polypeptide is Putative OPA3-like protein CG43998 (Drosophila melanogaster (Fruit fly)).